The chain runs to 166 residues: Putative peptidyl-prolyl cis-trans isomerase dodo (166 aa).

The region spanning 5-39 is the WW domain; sequence EQLPDGWEKRTSRSTGMSYYLNMYTKESQWDQPTE. The interval 32–53 is disordered; the sequence is SQWDQPTEPAKKAGGGSAGGGD. Residues 44–53 are compositionally biased toward gly residues; it reads AGGGSAGGGD. The PpiC domain occupies 55-166; that stretch reads PDEVHCLHLL…SGLHIILRKA (112 aa).

The enzyme catalyses [protein]-peptidylproline (omega=180) = [protein]-peptidylproline (omega=0). The chain is Putative peptidyl-prolyl cis-trans isomerase dodo (dod) from Drosophila melanogaster (Fruit fly).